We begin with the raw amino-acid sequence, 103 residues long: Large ribosomal subunit protein bL21 (103 aa).

It belongs to the bacterial ribosomal protein bL21 family. As to quaternary structure, part of the 50S ribosomal subunit. Contacts protein L20.

This protein binds to 23S rRNA in the presence of protein L20. This Variovorax paradoxus (strain S110) protein is Large ribosomal subunit protein bL21.